A 67-amino-acid chain; its full sequence is Probable Sec-independent protein translocase protein TatE (67 aa).

Residues 4–21 (ISITKLLVVAALIVLVFG) form a helical membrane-spanning segment. The segment at 43–67 (MNDDDTSVKKSAEEDVPADKISHKE) is disordered.

Belongs to the TatA/E family. TatE subfamily.

Its subcellular location is the cell inner membrane. Functionally, part of the twin-arginine translocation (Tat) system that transports large folded proteins containing a characteristic twin-arginine motif in their signal peptide across membranes. TatE shares overlapping functions with TatA. This Enterobacter lignolyticus (strain SCF1) protein is Probable Sec-independent protein translocase protein TatE.